A 414-amino-acid chain; its full sequence is NADH-ubiquinone oxidoreductase chain 4 (414 aa).

A run of 10 helical transmembrane segments spans residues 18-38, 47-67, 96-116, 126-146, 160-180, 188-208, 216-236, 254-274, 293-313, and 375-395; these read LVQL…MIGV, IAAF…LMSI, IIFI…PLHL, PTAG…YGYI, YFPI…IATL, IVAY…FSGV, IILM…IGVI, MMPI…AFPI, IIIA…SFWL, and VNIF…IVGM.

Belongs to the complex I subunit 4 family.

The protein resides in the mitochondrion membrane. The catalysed reaction is a ubiquinone + NADH + 5 H(+)(in) = a ubiquinol + NAD(+) + 4 H(+)(out). Its function is as follows. Core subunit of the mitochondrial membrane respiratory chain NADH dehydrogenase (Complex I) that is believed to belong to the minimal assembly required for catalysis. Complex I functions in the transfer of electrons from NADH to the respiratory chain. The immediate electron acceptor for the enzyme is believed to be ubiquinone. This chain is NADH-ubiquinone oxidoreductase chain 4 (nad4), found in Dictyostelium citrinum (Slime mold).